The following is a 238-amino-acid chain: Ribonuclease PH (238 aa).

Phosphate-binding positions include arginine 86 and 124-126; that span reads GTR.

It belongs to the RNase PH family. As to quaternary structure, homohexameric ring arranged as a trimer of dimers.

The catalysed reaction is tRNA(n+1) + phosphate = tRNA(n) + a ribonucleoside 5'-diphosphate. Functionally, phosphorolytic 3'-5' exoribonuclease that plays an important role in tRNA 3'-end maturation. Removes nucleotide residues following the 3'-CCA terminus of tRNAs; can also add nucleotides to the ends of RNA molecules by using nucleoside diphosphates as substrates, but this may not be physiologically important. Probably plays a role in initiation of 16S rRNA degradation (leading to ribosome degradation) during starvation. This is Ribonuclease PH from Anaeromyxobacter sp. (strain Fw109-5).